The primary structure comprises 344 residues: DNA integrity scanning protein DisA (344 aa).

Residues 1-133 (MALLAPGTPI…GRRYLIERPE (133 aa)) enclose the DAC domain. Residues glycine 61 and 92-96 (TRHRT) contribute to the ATP site.

This sequence belongs to the DisA family. As to quaternary structure, homooctamer. The cofactor is Mg(2+).

The enzyme catalyses 2 ATP = 3',3'-c-di-AMP + 2 diphosphate. Functionally, participates in a DNA-damage check-point. DisA forms globular foci that rapidly scan along the chromosomes searching for lesions. Also has diadenylate cyclase activity, catalyzing the condensation of 2 ATP molecules into cyclic di-AMP (c-di-AMP). c-di-AMP likely acts as a signaling molecule that may couple DNA integrity with a cellular process. The chain is DNA integrity scanning protein DisA from Cutibacterium acnes (strain DSM 16379 / KPA171202) (Propionibacterium acnes).